Consider the following 342-residue polypeptide: RNA 3'-terminal phosphate cyclase (342 aa).

This sequence belongs to the RNA 3'-terminal cyclase family. Type 1 subfamily.

It localises to the cytoplasm. The enzyme catalyses a 3'-end 3'-phospho-ribonucleotide-RNA + GTP = a 3'-end 2',3'-cyclophospho-ribonucleotide-RNA + GMP + diphosphate. Its activity is regulated as follows. Inhibited by GMP. Functionally, catalyzes the GTP-dependent conversion of 3'-phosphate to a 2',3'-cyclic phosphodiester at the end of RNA. The biological role of this enzyme is unknown but it is likely to function in some aspects of cellular RNA processing. This is RNA 3'-terminal phosphate cyclase from Pyrococcus furiosus (strain ATCC 43587 / DSM 3638 / JCM 8422 / Vc1).